Reading from the N-terminus, the 316-residue chain is Ribosomal RNA small subunit methyltransferase H (316 aa).

S-adenosyl-L-methionine is bound by residues glycine 35–histidine 37, aspartate 55, tyrosine 79, aspartate 100, and glutamine 107.

Belongs to the methyltransferase superfamily. RsmH family.

Its subcellular location is the cytoplasm. It catalyses the reaction cytidine(1402) in 16S rRNA + S-adenosyl-L-methionine = N(4)-methylcytidine(1402) in 16S rRNA + S-adenosyl-L-homocysteine + H(+). Its function is as follows. Specifically methylates the N4 position of cytidine in position 1402 (C1402) of 16S rRNA. This chain is Ribosomal RNA small subunit methyltransferase H, found in Nitrosospira multiformis (strain ATCC 25196 / NCIMB 11849 / C 71).